The primary structure comprises 288 residues: Acetyl-coenzyme A carboxylase carboxyl transferase subunit beta (288 aa).

The CoA carboxyltransferase N-terminal domain maps to 34–288 (LFSKCPACKV…RLLRMHGGVR (255 aa)). Positions 38, 41, 56, and 59 each coordinate Zn(2+). The segment at 38–59 (CPACKVILYKNDLGLEKTCQHC) adopts a C4-type zinc-finger fold.

It belongs to the AccD/PCCB family. As to quaternary structure, acetyl-CoA carboxylase is a heterohexamer composed of biotin carboxyl carrier protein (AccB), biotin carboxylase (AccC) and two subunits each of ACCase subunit alpha (AccA) and ACCase subunit beta (AccD). Requires Zn(2+) as cofactor.

The protein resides in the cytoplasm. It catalyses the reaction N(6)-carboxybiotinyl-L-lysyl-[protein] + acetyl-CoA = N(6)-biotinyl-L-lysyl-[protein] + malonyl-CoA. The protein operates within lipid metabolism; malonyl-CoA biosynthesis; malonyl-CoA from acetyl-CoA: step 1/1. Component of the acetyl coenzyme A carboxylase (ACC) complex. Biotin carboxylase (BC) catalyzes the carboxylation of biotin on its carrier protein (BCCP) and then the CO(2) group is transferred by the transcarboxylase to acetyl-CoA to form malonyl-CoA. The sequence is that of Acetyl-coenzyme A carboxylase carboxyl transferase subunit beta from Streptococcus suis (strain 98HAH33).